The following is a 321-amino-acid chain: Putative ribose-phosphate pyrophosphokinase 2 (321 aa).

Residues 41–43 (DGE) and 100–101 (RQ) contribute to the ATP site. His-134 contributes to the Mg(2+) binding site. Residues Asp-223 and 227-231 (NTGVT) contribute to the D-ribose 5-phosphate site.

This sequence belongs to the ribose-phosphate pyrophosphokinase family. Class I subfamily. In terms of assembly, homohexamer. The cofactor is Mg(2+).

It localises to the cytoplasm. The catalysed reaction is D-ribose 5-phosphate + ATP = 5-phospho-alpha-D-ribose 1-diphosphate + AMP + H(+). It functions in the pathway metabolic intermediate biosynthesis; 5-phospho-alpha-D-ribose 1-diphosphate biosynthesis; 5-phospho-alpha-D-ribose 1-diphosphate from D-ribose 5-phosphate (route I): step 1/1. Functionally, involved in the biosynthesis of the central metabolite phospho-alpha-D-ribosyl-1-pyrophosphate (PRPP) via the transfer of pyrophosphoryl group from ATP to 1-hydroxyl of ribose-5-phosphate (Rib-5-P). The polypeptide is Putative ribose-phosphate pyrophosphokinase 2 (Lactococcus lactis subsp. lactis (strain IL1403) (Streptococcus lactis)).